The sequence spans 434 residues: Glutamyl-tRNA reductase (434 aa).

Residues 49-52, serine 109, 114-116, and glutamine 120 contribute to the substrate site; these read TCNR and EPQ. Residue cysteine 50 is the Nucleophile of the active site. NADP(+) is bound at residue 189–194; sequence GAGEMC.

The protein belongs to the glutamyl-tRNA reductase family. Homodimer.

It catalyses the reaction (S)-4-amino-5-oxopentanoate + tRNA(Glu) + NADP(+) = L-glutamyl-tRNA(Glu) + NADPH + H(+). The protein operates within porphyrin-containing compound metabolism; protoporphyrin-IX biosynthesis; 5-aminolevulinate from L-glutamyl-tRNA(Glu): step 1/2. Catalyzes the NADPH-dependent reduction of glutamyl-tRNA(Glu) to glutamate 1-semialdehyde (GSA). The chain is Glutamyl-tRNA reductase from Citrifermentans bemidjiense (strain ATCC BAA-1014 / DSM 16622 / JCM 12645 / Bem) (Geobacter bemidjiensis).